A 289-amino-acid chain; its full sequence is ATP synthase gamma chain (289 aa).

The protein belongs to the ATPase gamma chain family. F-type ATPases have 2 components, CF(1) - the catalytic core - and CF(0) - the membrane proton channel. CF(1) has five subunits: alpha(3), beta(3), gamma(1), delta(1), epsilon(1). CF(0) has three main subunits: a, b and c.

It is found in the cell inner membrane. Its function is as follows. Produces ATP from ADP in the presence of a proton gradient across the membrane. The gamma chain is believed to be important in regulating ATPase activity and the flow of protons through the CF(0) complex. This Coxiella burnetii (strain CbuG_Q212) (Coxiella burnetii (strain Q212)) protein is ATP synthase gamma chain.